The sequence spans 162 residues: Dihydrofolate reductase type 3 (162 aa).

The DHFR domain maps to 2-160 (LISLIAALAH…YACEFVTLSR (159 aa)).

Belongs to the dihydrofolate reductase family. In terms of assembly, monomer.

It catalyses the reaction (6S)-5,6,7,8-tetrahydrofolate + NADP(+) = 7,8-dihydrofolate + NADPH + H(+). It participates in cofactor biosynthesis; tetrahydrofolate biosynthesis; 5,6,7,8-tetrahydrofolate from 7,8-dihydrofolate: step 1/1. Functionally, key enzyme in folate metabolism. Catalyzes an essential reaction for de novo glycine and purine synthesis, and for DNA precursor synthesis. The sequence is that of Dihydrofolate reductase type 3 (dhfrIII) from Salmonella typhimurium.